A 653-amino-acid polypeptide reads, in one-letter code: Probable sulfate transporter 3.4 (653 aa).

Residues 1–92 are Cytoplasmic-facing; the sequence is MGHGTNRVED…QYDLKLLRSD (92 aa). The chain crosses the membrane as a helical span at residues 93 to 113; that stretch reads VISGLTIASLAIPQGISYAKL. At 114–115 the chain is on the extracellular side; that stretch reads AN. Residues 116–136 traverse the membrane as a helical segment; the sequence is LPPIVGLYSSFVPPLIYAVLG. Residues 137–140 are Cytoplasmic-facing; sequence SSRH. The chain crosses the membrane as a helical span at residues 141 to 161; it reads LAVGPVSIASLVMGSMLSESV. Over 162–167 the chain is Extracellular; the sequence is SPTQDS. The chain crosses the membrane as a helical span at residues 168–188; it reads ILYLKLAFTSTFFAGVFQASL. The Cytoplasmic portion of the chain corresponds to 189–194; it reads GLLRLG. The chain crosses the membrane as a helical span at residues 195 to 215; that stretch reads FMIDFLSKATLIGFTAGAAVI. Residues 216–247 are Extracellular-facing; it reads VSLQQLKGLLGIVHFTGKMQIVPVMSSVFNHR. Residues 248 to 268 traverse the membrane as a helical segment; it reads SEWSWETIVMGIGFLSILLTT. Over 269–279 the chain is Cytoplasmic; the sequence is RHISMRKPKLF. A helical membrane pass occupies residues 280–300; sequence WISAASPLASVIISTLLVYLI. At 301–331 the chain is on the extracellular side; it reads RSKTHAISFIGHLPKGLNPPSLNMLYFSGAH. The helical transmembrane segment at 332–352 threads the bilayer; that stretch reads LALAIKTGIITGILSLTEGIA. The Cytoplasmic segment spans residues 353–370; that stretch reads VGRTFASLKNYQVNGNKE. A helical membrane pass occupies residues 371-391; that stretch reads MMAIGFMNMAGSCTSCYVTTG. Topologically, residues 392–407 are extracellular; it reads SFSRSAVNYNAGAKTA. The helical transmembrane segment at 408–428 threads the bilayer; sequence VSNIVMASAVLVTLLFLMPLF. Over 429–433 the chain is Cytoplasmic; sequence YYTPN. Residues 434 to 454 traverse the membrane as a helical segment; it reads VILAAIILTAVIGLIDYQAAY. Residues 455 to 471 lie on the Extracellular side of the membrane; it reads KLWKVDKFDFFTCLCSF. Residues 472–492 form a helical membrane-spanning segment; that stretch reads FGVLFVSVPLGLAIAVAVSVI. Over 493-653 the chain is Cytoplasmic; that stretch reads KILLHVTRPN…SSTWKANGQP (161 aa). One can recognise an STAS domain in the interval 520–643; sequence RYREASRIPG…LTVGEAVADL (124 aa).

Belongs to the SLC26A/SulP transporter (TC 2.A.53) family.

The protein resides in the membrane. In terms of biological role, h(+)/sulfate cotransporter that may play a role in the regulation of sulfate assimilation. The sequence is that of Probable sulfate transporter 3.4 (SULTR3;4) from Arabidopsis thaliana (Mouse-ear cress).